The following is a 141-amino-acid chain: Lutropin subunit beta (141 aa).

The N-terminal stretch at 1-20 (MERLQGLLLWLLLSPSVVWA) is a signal peptide. 6 disulfide bridges follow: C29–C77, C43–C92, C46–C130, C54–C108, C58–C110, and C113–C120. N-linked (GlcNAc...) asparagine glycosylation is present at N33.

Belongs to the glycoprotein hormones subunit beta family. Heterodimer of a common alpha chain and a unique beta chain which confers biological specificity to thyrotropin, lutropin, follitropin and gonadotropin.

It localises to the secreted. In terms of biological role, promotes spermatogenesis and ovulation by stimulating the testes and ovaries to synthesize steroids. The sequence is that of Lutropin subunit beta (Lhb) from Rattus norvegicus (Rat).